We begin with the raw amino-acid sequence, 21 residues long: Cupiennin-6e (21 aa).

Serine 21 carries the post-translational modification Serine amide.

As to expression, expressed by the venom gland.

The protein resides in the secreted. This is Cupiennin-6e from Cupiennius salei (American wandering spider).